Consider the following 100-residue polypeptide: Large ribosomal subunit protein uL23 (100 aa).

It belongs to the universal ribosomal protein uL23 family. In terms of assembly, part of the 50S ribosomal subunit. Contacts protein L29, and trigger factor when it is bound to the ribosome.

One of the early assembly proteins it binds 23S rRNA. One of the proteins that surrounds the polypeptide exit tunnel on the outside of the ribosome. Forms the main docking site for trigger factor binding to the ribosome. The chain is Large ribosomal subunit protein uL23 from Prochlorococcus marinus (strain MIT 9312).